Here is a 563-residue protein sequence, read N- to C-terminus: BOS complex subunit NCLN (563 aa).

Residues 1–42 form the signal peptide; sequence MLEEAGEVLENMLKASCLPLGFIVFLPAVLLLVAPPLPAADA. Residues 43–522 are Lumenal-facing; that stretch reads AHEFTVYRMQ…VMNAYRVKPA (480 aa). Residues asparagine 241 and asparagine 428 are each glycosylated (N-linked (GlcNAc...) asparagine). Residues 523–543 form a helical membrane-spanning segment; the sequence is IFDLLLAVCIGAYLGMAYTAV. At 544 to 563 the chain is on the cytoplasmic side; the sequence is QHFDLLYKTVQRLLVKAKTQ.

It belongs to the nicastrin family. Component of the back of Sec61 (BOS) complex, composed of NCLN/Nicalin, NOMO1 and TMEM147. The BOS complex is part of the multi-pass translocon (MPT) complex, composed of three subcomplexes, the GEL complex (composed of RAB5IF/OPTI and TMCO1), the BOS complex (composed of NCLN/Nicalin, NOMO1 and TMEM147) and the PAT complex (composed of WDR83OS/Asterix and CCDC47). The MPT complex associates with the SEC61 complex.

Its subcellular location is the endoplasmic reticulum membrane. Its function is as follows. Component of the multi-pass translocon (MPT) complex that mediates insertion of multi-pass membrane proteins into the lipid bilayer of membranes. The MPT complex takes over after the SEC61 complex: following membrane insertion of the first few transmembrane segments of proteins by the SEC61 complex, the MPT complex occludes the lateral gate of the SEC61 complex to promote insertion of subsequent transmembrane regions. May antagonize Nodal signaling and subsequent organization of axial structures during mesodermal patterning, via its interaction with NOMO. This Canis lupus familiaris (Dog) protein is BOS complex subunit NCLN.